The primary structure comprises 526 residues: Plant intracellular Ras-group-related LRR protein 5 (526 aa).

11 LRR repeats span residues 229–252, 253–275, 276–297, 298–321, 323–344, 346–367, 368–390, 391–414, 416–437, 438–463, and 465–484; these read LSSL…IGGL, ISLT…IGDL, LNLV…SFNR, LIHL…IGSL, SLKK…ISGC, SMEE…VGKL, STLE…MSSM, ANLK…CYAK, LVKL…LIGN, LEKL…TLSN, and RVLQ…ITEK. A GVYW; degenerate motif is present at residues 485–492; that stretch reads GAQAVVQY.

The protein belongs to the SHOC2 family. As to expression, widely expressed but preferentially in roots.

In terms of biological role, leucine-rich repeat protein that likely mediates protein interactions, possibly in the context of signal transduction. This is Plant intracellular Ras-group-related LRR protein 5 (PIRL5) from Arabidopsis thaliana (Mouse-ear cress).